A 284-amino-acid chain; its full sequence is Tropomyosin (284 aa).

Residues 1–280 (MDAIKKKMQA…SDELDQTFAE (280 aa)) are a coiled coil.

The protein belongs to the tropomyosin family. In terms of assembly, homodimer.

Its function is as follows. Tropomyosin, in association with the troponin complex, plays a central role in the calcium dependent regulation of muscle contraction. This chain is Tropomyosin, found in Sinonovacula constricta (Razor clam).